The primary structure comprises 349 residues: Probable G-protein coupled receptor 21 (349 aa).

Topologically, residues 1–32 (MNSTWDGNQSSHPFCLLALGYLETVRFCLLEV) are extracellular. Residues Asn-2 and Asn-8 are each glycosylated (N-linked (GlcNAc...) asparagine). The helical transmembrane segment at 33–53 (LIIVFLTVLIISGNIIVIFVF) threads the bilayer. At 54–75 (HCAPLLNHHSTSYFIQTMAYAD) the chain is on the cytoplasmic side. Residues 76–96 (LLVGVSCLVPSLSLLYYPLPI) traverse the membrane as a helical segment. Topologically, residues 97–104 (EEAMTCQV) are extracellular. Residues 105 to 125 (FGFVVSVLKSISMASLACISI) traverse the membrane as a helical segment. Topologically, residues 126–147 (DRYIAITKPLTYNTLVTPWRLR) are cytoplasmic. The helical transmembrane segment at 148 to 168 (LCIFLIWLYSTLVFLPSFFHW) threads the bilayer. At 169-191 (GKPGYHGDVFQWCAESWHTNSYF) the chain is on the extracellular side. A helical membrane pass occupies residues 192–212 (TLFIVMMLYAPAALIVCFTYF). The Cytoplasmic segment spans residues 213-252 (NIFRICQQHTKEISERQARFSSQNGETGEPQTCPDKRYAM). A helical transmembrane segment spans residues 253–273 (VLFRITSVFYVLWLPYIIYFL). The Extracellular segment spans residues 274–283 (LESSTGCSSR). A helical transmembrane segment spans residues 284–304 (LASFLTTWLAISNSFCNCIIY). Residues 305–349 (SLSNSVFQRGLKGLSGSLCTSCASHTTAKDPYTVRCKGPPNGSHI) lie on the Cytoplasmic side of the membrane.

The protein belongs to the G-protein coupled receptor 1 family.

It localises to the cell membrane. Its function is as follows. Orphan receptor. The sequence is that of Probable G-protein coupled receptor 21 (Gpr21) from Mus musculus (Mouse).